A 232-amino-acid polypeptide reads, in one-letter code: Sugar fermentation stimulation protein homolog (232 aa).

Belongs to the SfsA family.

The polypeptide is Sugar fermentation stimulation protein homolog (Ruegeria sp. (strain TM1040) (Silicibacter sp.)).